The sequence spans 164 residues: Photosystem II extrinsic protein V (164 aa).

A signal peptide spans 1-27 (MIPNRKIQLSLFAVIIVFETLLNQVYA). Cys-64, Cys-67, His-68, and Met-131 together coordinate heme c.

The protein belongs to the cytochrome c family. PsbV subfamily. In terms of assembly, PSII is composed of 1 copy each of membrane proteins PsbA, PsbB, PsbC, PsbD, PsbE, PsbF, PsbH, PsbI, PsbJ, PsbK, PsbL, PsbM, PsbT, PsbY, PsbZ, Psb30/Ycf12, at least 3 peripheral proteins of the oxygen-evolving complex and a large number of cofactors. It forms dimeric complexes. The extrinsic subunits in red algae are PsbO (OEC33), PsbQ', cytochrome c-550 and PsbU. Requires heme c as cofactor.

It is found in the plastid. It localises to the chloroplast thylakoid membrane. In terms of biological role, one of the extrinsic, lumenal subunits of photosystem II (PSII). PSII is a light-driven water plastoquinone oxidoreductase, using light energy to abstract electrons from H(2)O, generating a proton gradient subsequently used for ATP formation. The extrinsic proteins stabilize the structure of photosystem II oxygen-evolving complex (OEC), the ion environment of oxygen evolution and protect the OEC against heat-induced inactivation. The chain is Photosystem II extrinsic protein V from Gracilaria tenuistipitata var. liui (Red alga).